Here is a 430-residue protein sequence, read N- to C-terminus: MDRIRIVGGNELHGVIPISGAKNAALPLMIASLLTDDTLTLENVPHLADVEQLIRILGNHGADISVNGRRERQGESYARTVHFTSRNIVSTTAPYELVSKMRASFWVIGPLLAREGRARVSLPGGCAIGTRPVDLFIEGLTALGASIEIDGGYVNATAPAGGLIGGRYTFPKVSVGATHVLMMAATLANGTTVLGNAAREPEVVDLAKCLNAMGAKISGQGTSTITIEGVRSLSGARHRVLPDRIETGTYAMAVAMAGGDVILEDTEASLLDTALEAIRRAGAEISDTNNGIRIVRNGAGIRPVDIVTDPFPGFPTDLQAQFMGLMTRSSGVSHITETIFENRFMHVQELARLGAKISLSGQTAKVEGVSRLKGAPVMATDLRASVSLVIAGLAAEGETMVSRVYHLDRGFERLEEKLTRCGAHVERVSD.

Position 22-23 (22-23 (KN)) interacts with phosphoenolpyruvate. A UDP-N-acetyl-alpha-D-glucosamine-binding site is contributed by Arg102. Residue Cys126 is the Proton donor of the active site. The residue at position 126 (Cys126) is a 2-(S-cysteinyl)pyruvic acid O-phosphothioketal. UDP-N-acetyl-alpha-D-glucosamine contacts are provided by residues 131–135 (RPVDL), 172–175 (KVSV), Asp317, and Ile339.

Belongs to the EPSP synthase family. MurA subfamily.

The protein resides in the cytoplasm. The catalysed reaction is phosphoenolpyruvate + UDP-N-acetyl-alpha-D-glucosamine = UDP-N-acetyl-3-O-(1-carboxyvinyl)-alpha-D-glucosamine + phosphate. It functions in the pathway cell wall biogenesis; peptidoglycan biosynthesis. In terms of biological role, cell wall formation. Adds enolpyruvyl to UDP-N-acetylglucosamine. The protein is UDP-N-acetylglucosamine 1-carboxyvinyltransferase of Sinorhizobium medicae (strain WSM419) (Ensifer medicae).